The chain runs to 409 residues: MTSPQTHVIVIGAGITGLLTCQGLKKAGISYSCFERDTSLNSRSNEWTMAIHWSLPLLAEILPTEVRAKLATIACNPVAGIHSGLYPIIHGETGDLITGVPYKDGLRVPRSKMRALCAEGIDVQYGKTLADVAFNESGNGVVATFTDGTLVAGTMIVGADGPRSRVRETAMGDAKLAATTSFPIFHTNMTVCYNDAEKAKFVREKYPTSYLALSERSFHAFQSISSMPDGPDHPETWVFHMAMAWMGQSDNAMCYAERLALVKSKAEGLGEPARSAFMWMPEETEVHKADISYWISQPWNNRDGRLTLVGDAAHPMPPYRGQGLNHCICDVSKLLAGLAGVHSGSTTLSDAIQEFEAEMIPRGKEEVTCSVENGKMLHDWNKIQESPVFKRGFLPMDGHDTRKEIAQAS.

The FAD site is built by glutamate 35, alanine 50, arginine 110, and aspartate 311.

The protein belongs to the paxM FAD-dependent monooxygenase family. FAD serves as cofactor.

It carries out the reaction 3,6,7,9-tetrahydroxy-3-methyl-2,3-dihydro-1H-naphtho[2,1-b]pyran-1-one + NADPH + O2 + H(+) = 2,3,4,7,9-pentahydroxy-6-methyl-1H-phenalen-1-one + NADP(+) + 2 H2O. Its pathway is secondary metabolite biosynthesis. FAD-dependent monooxygenase; part of the gene cluster that mediates the biosynthesis of phenalenones such as herqueinone, compounds that have been reported to treat tumors, bacterial infections and/or mycoses, and rheumatic diseases. The non-reducing polyketide synthase phnA synthesizes the heptaketide backbone and cyclizes it into the angular, hemiketal-containing naphtho-gamma-pyrone prephenalenone. The product template (PT) domain of phnA catalyzes only the C4-C9 aldol condensation, which is unprecedented among known PT domains. The transformation of prephenalenone to phenalenones requires an FAD-dependent monooxygenase phnB, which catalyzes the C2 aromatic hydroxylation of prephenalenone and ring opening of the gamma-pyrone ring simultaneously. Subsequent intramolecular deprotonation of C3 phenolic oxygen accelerates phenalenone ring closure to yield the tricyclic phenalenone core with a C2 hydroxylation. The prenyltransferase phnF further catalyzes reverse C-prenylation of phenalenone by direct electrophilic substitution at C6, or possibly via first a forward O-prenylation of a neighboring phenol in phenalenone, followed by a Claisen rearrangement. The hydroalkoxylation enzyme phnH catalyzes the 5-exo-trig cyclization via acid catalysis after the spontaneous deprotonation of 7-OH, which leads to the formation of the dihydrobenzofuran atrovenetin. Atrovenetin is further converted to deoxyherqueinone by the O-methyltransferase phnC which can methylate C2-OH to stabilize the northern portion of the phenalenone core. Finally, the oxidoreductase phnG converts deoxyherqueinone to herqueinone via C6 hydroxylation. The polypeptide is FAD-dependent monooxygenase phnB (Penicillium herquei).